The sequence spans 339 residues: Nicotinate-nucleotide--dimethylbenzimidazole phosphoribosyltransferase (339 aa).

Glu-306 acts as the Proton acceptor in catalysis.

It belongs to the CobT family.

The catalysed reaction is 5,6-dimethylbenzimidazole + nicotinate beta-D-ribonucleotide = alpha-ribazole 5'-phosphate + nicotinate + H(+). The protein operates within nucleoside biosynthesis; alpha-ribazole biosynthesis; alpha-ribazole from 5,6-dimethylbenzimidazole: step 1/2. Catalyzes the synthesis of alpha-ribazole-5'-phosphate from nicotinate mononucleotide (NAMN) and 5,6-dimethylbenzimidazole (DMB). The polypeptide is Nicotinate-nucleotide--dimethylbenzimidazole phosphoribosyltransferase (Brucella melitensis biotype 2 (strain ATCC 23457)).